The primary structure comprises 224 residues: Phosphoribosylformylglycinamidine synthase subunit PurQ (224 aa).

One can recognise a Glutamine amidotransferase type-1 domain in the interval 4-224 (RIGIITFPGT…YSVLDGVLAG (221 aa)). C87 serves as the catalytic Nucleophile. Residues H195 and E197 contribute to the active site.

Part of the FGAM synthase complex composed of 1 PurL, 1 PurQ and 2 PurS subunits.

It is found in the cytoplasm. It catalyses the reaction N(2)-formyl-N(1)-(5-phospho-beta-D-ribosyl)glycinamide + L-glutamine + ATP + H2O = 2-formamido-N(1)-(5-O-phospho-beta-D-ribosyl)acetamidine + L-glutamate + ADP + phosphate + H(+). The enzyme catalyses L-glutamine + H2O = L-glutamate + NH4(+). It participates in purine metabolism; IMP biosynthesis via de novo pathway; 5-amino-1-(5-phospho-D-ribosyl)imidazole from N(2)-formyl-N(1)-(5-phospho-D-ribosyl)glycinamide: step 1/2. Its function is as follows. Part of the phosphoribosylformylglycinamidine synthase complex involved in the purines biosynthetic pathway. Catalyzes the ATP-dependent conversion of formylglycinamide ribonucleotide (FGAR) and glutamine to yield formylglycinamidine ribonucleotide (FGAM) and glutamate. The FGAM synthase complex is composed of three subunits. PurQ produces an ammonia molecule by converting glutamine to glutamate. PurL transfers the ammonia molecule to FGAR to form FGAM in an ATP-dependent manner. PurS interacts with PurQ and PurL and is thought to assist in the transfer of the ammonia molecule from PurQ to PurL. This is Phosphoribosylformylglycinamidine synthase subunit PurQ from Mycolicibacterium paratuberculosis (strain ATCC BAA-968 / K-10) (Mycobacterium paratuberculosis).